Here is a 137-residue protein sequence, read N- to C-terminus: Prefoldin subunit alpha (137 aa).

The protein belongs to the prefoldin subunit alpha family. As to quaternary structure, heterohexamer of two alpha and four beta subunits.

The protein localises to the cytoplasm. Functionally, molecular chaperone capable of stabilizing a range of proteins. Seems to fulfill an ATP-independent, HSP70-like function in archaeal de novo protein folding. The protein is Prefoldin subunit alpha (pfdA) of Archaeoglobus fulgidus (strain ATCC 49558 / DSM 4304 / JCM 9628 / NBRC 100126 / VC-16).